The chain runs to 276 residues: Arginine and glutamate-rich protein 1 (276 aa).

Composition is skewed to basic residues over residues 1-30 and 38-59; these read MGRSRSRSSSRSKHTKSSKHNKKNRSRSRS and ARKRSKSRESKRNRRRESRSRS. A necessary and sufficient for RNA binding region spans residues 1-77; it reads MGRSRSRSSS…RRDRERERER (77 aa). A disordered region spans residues 1 to 117; sequence MGRSRSRSSS…EKKAEFERQR (117 aa). Basic and acidic residues-rich tracts occupy residues 67–87 and 96–117; these read SRRDRERERERASSPPDRIDI and SSLDEKQKREEEEKKAEFERQR. A necessary and sufficient for transcriptional regulation region spans residues 78 to 276; sequence ASSPPDRIDI…KLSFSLKSQD (199 aa). Residues 175–179 carry the LXXLL motif 1; degenerate motif; it reads LLEEL. The short motif at 204-208 is the LXXLL motif 2; degenerate element; it reads LERIL. Over residues 240-256 the composition is skewed to basic and acidic residues; sequence RMKLEQERQRQQKEEQK. Residues 240–276 are disordered; the sequence is RMKLEQERQRQQKEEQKIILGKGKSRPKLSFSLKSQD.

This sequence belongs to the ARGLU1 family.

Its subcellular location is the nucleus. The protein resides in the nucleus speckle. The protein localises to the chromosome. Its function is as follows. Dual function regulator of gene expression; regulator of transcription and modulator of alternative splicing. General coactivator of nuclear receptor-induced gene expression. The chain is Arginine and glutamate-rich protein 1 (ARGLU1) from Gallus gallus (Chicken).